We begin with the raw amino-acid sequence, 473 residues long: Photosystem II CP43 reaction center protein (473 aa).

Residues 1 to 14 constitute a propeptide that is removed on maturation; sequence MKTLYSLRRFYHVE. N-acetylthreonine is present on Thr15. Thr15 bears the Phosphothreonine mark. 5 helical membrane-spanning segments follow: residues 69 to 93, 134 to 155, 178 to 200, 255 to 275, and 291 to 312; these read LFEVAHFVPEKPMYEQGLILLPHLA, LLGPETLEESFPFFGYVWKDRN, KALYFGGVYDTWAPGGGDVRKIA, KPFAWARRAFVWSGEAYLSYS, and WFNNTAYPSEFYGPTGPEASQA. [CaMn4O5] cluster is bound at residue Glu367. The chain crosses the membrane as a helical span at residues 447-471; it reads RARAAAAGFEKGIDRDFEPVLSMTP.

The protein belongs to the PsbB/PsbC family. PsbC subfamily. As to quaternary structure, PSII is composed of 1 copy each of membrane proteins PsbA, PsbB, PsbC, PsbD, PsbE, PsbF, PsbH, PsbI, PsbJ, PsbK, PsbL, PsbM, PsbT, PsbX, PsbY, PsbZ, Psb30/Ycf12, at least 3 peripheral proteins of the oxygen-evolving complex and a large number of cofactors. It forms dimeric complexes. Requires Binds multiple chlorophylls and provides some of the ligands for the Ca-4Mn-5O cluster of the oxygen-evolving complex. It may also provide a ligand for a Cl- that is required for oxygen evolution. PSII binds additional chlorophylls, carotenoids and specific lipids. as cofactor.

The protein localises to the plastid membrane. In terms of biological role, one of the components of the core complex of photosystem II (PSII). It binds chlorophyll and helps catalyze the primary light-induced photochemical processes of PSII. PSII is a light-driven water:plastoquinone oxidoreductase, using light energy to abstract electrons from H(2)O, generating O(2) and a proton gradient subsequently used for ATP formation. The protein is Photosystem II CP43 reaction center protein of Cuscuta exaltata (Tall dodder).